We begin with the raw amino-acid sequence, 396 residues long: Protein GTS1 (396 aa).

Residues 14–141 (DRELKELINS…FRYDEIKPED (128 aa)) form the Arf-GAP domain. The C4-type zinc finger occupies 30 to 53 (CGECGNFYPTWCSVNLGVFLCGRC). A compositionally biased stretch (basic and acidic residues) spans 148–161 (DFDGESDRFDERNR). Disordered regions lie at residues 148–194 (DFDG…SGSR) and 233–266 (KSSSSRNSVSAAATTSTPPLPRRRATTSGPQPAI). Phosphoserine is present on serine 153. Tyrosine 181 bears the Phosphotyrosine mark. A phosphoserine mark is found at serine 184 and serine 187. A UBA domain is found at 193–234 (SRYSRQLAELKDMGFGDTNKNLDALSSAHGNINRAIDYLEKS). The segment covering 234–249 (SSSSRNSVSAAATTST) has biased composition (low complexity). Phosphoserine is present on serine 240. Position 249 is a phosphothreonine (threonine 249).

The protein localises to the nucleus. In terms of biological role, appears to modulate the timing of budding to obtain an appropriate cell size independent of the DNA replication cycle. Transcription factor involved in both heat resistance and flocculation. This is Protein GTS1 (GTS1) from Saccharomyces cerevisiae (strain ATCC 204508 / S288c) (Baker's yeast).